A 229-amino-acid polypeptide reads, in one-letter code: Large ribosomal subunit protein uL1 (229 aa).

Belongs to the universal ribosomal protein uL1 family. Part of the 50S ribosomal subunit.

In terms of biological role, binds directly to 23S rRNA. The L1 stalk is quite mobile in the ribosome, and is involved in E site tRNA release. Its function is as follows. Protein L1 is also a translational repressor protein, it controls the translation of the L11 operon by binding to its mRNA. This Caulobacter sp. (strain K31) protein is Large ribosomal subunit protein uL1.